The following is a 194-amino-acid chain: Putative manganese efflux pump MntP (194 aa).

The next 6 helical transmembrane spans lie at 8–28 (LLAI…GIIL), 36–56 (MLIM…LGWL), 61–81 (FSHL…AFLG), 109–129 (MAVA…FLGI), 138–158 (PAGI…IFGI), and 172–192 (LWGG…HLFF).

It belongs to the MntP (TC 9.B.29) family.

It is found in the cell inner membrane. Functionally, probably functions as a manganese efflux pump. In Bacteroides fragilis (strain ATCC 25285 / DSM 2151 / CCUG 4856 / JCM 11019 / LMG 10263 / NCTC 9343 / Onslow / VPI 2553 / EN-2), this protein is Putative manganese efflux pump MntP.